Consider the following 384-residue polypeptide: MGVTGAHGFPCCGKGSVEVAEMRDDLSQHQIQEEQELEADMLEQKPQLQVDLDLDPDPDPDPELEIGQVPALLESELYPALKLEAELDTEANSNEESDFEEPMQLVCKIESVHSNMGLPTPQTFRPWSLNSNCRSFTEENHVSACHHSISAQTSKHLFWANKLIQASEHSLQRAINMQLNNGSAGQPIRSPLREAIPTNALCSEEQLQIPDAHSAPPTTSSQAPSPLLSSDLPPPIDLTELITFASSLAMASSSRMDLPSLEHMMKAPPQEALEPSTEPLLTTVEEREPENHAETLPEKPREARAPLKSWSQEDKNFAQSYFDFSKPGIKRATIKGQIQLLQPPATSPLLQGSKEDSVPPGKEKENPLLVKIHFKLSAPTIPEK.

The tract at residues 23 to 60 (RDDLSQHQIQEEQELEADMLEQKPQLQVDLDLDPDPDP) is disordered. Phosphoserine is present on residues serine 167 and serine 170. 3 disordered regions span residues 211 to 232 (DAHS…SSDL), 284 to 310 (VEER…LKSW), and 340 to 366 (LLQP…EKEN). The segment covering 214–231 (SAPPTTSSQAPSPLLSSD) has biased composition (low complexity). The span at 353-366 (SKEDSVPPGKEKEN) shows a compositional bias: basic and acidic residues.

In terms of assembly, interacts with syntaxin-1 and ACTB. Detected in testis, and on the acrosomal cap of spermatids.

The polypeptide is Spermatogenesis-associated protein 32 (SPATA32) (Homo sapiens (Human)).